A 120-amino-acid chain; its full sequence is Secreted effector PIT2 (120 aa).

A signal peptide spans 1-25 (MLFRSAFVLLIVAFASACLVQHVQA). Residues 46-59 (KLNRRWWFGFTGSL) form a PID14 protease inhibitor domain region.

Interacts with host cysteine proteases CP1A, CP1B, XCP2 and CP2. Cleaved by host target papain-like cysteine proteases (PLCPs) to release the embedded inhibitor peptide PID14.

Its subcellular location is the secreted. Its function is as follows. Secreted effector required for virulence. Functions as an inhibitor of a set of apoplastic maize papain-like cysteine proteases (PLCPs) including CP1A, CP1B, XCP2 and CP2, whose activity is directly linked with salicylic-acid-associated plant defenses. Acts as a substrate mimicking molecule for apoplastic PLCPs and its processing releases the embedded inhibitor peptide PID14, which in turn blocks PLCPs to modulate host immunity. The polypeptide is Secreted effector PIT2 (Mycosarcoma maydis (Corn smut fungus)).